A 427-amino-acid polypeptide reads, in one-letter code: MLRKLWRRKLFSFPTKYYFLFLAFSVVTFTVLRIHQKTEFVNFGHLELFEENPSSNINCTKILQGDVDEIQKVKLESLTVKFKKRARWTNYDYINMTGDCASFIKKRKYITEPLSKEEAGFPIAYSIVVHHKIEMLDRLLRAIYMPQNFYCIHVDAKSEKSFLAAAVGIASCFSNVFVASQLESVVYASWSRVQADLNCMQDLYQMNAGWKYLINLCGMDFPIKTNLEIVRKLKLLMGENNLETEKMPSHKKERWKKHYEVVNGKLTNMGTDKIHPPLETPLFSGSAHFVVSREYVEYVLQNQNIQKFMEWAKDTYSPDEYLWATIQRIPEVPGSLSLSYKYDTSDMQAIARFVKWQYFEGDVSKGAPYPPCSVHVRSVCVFGAGDLNWLLHVHHLFANKFDTDIDLFAIQCLDEHLRHKALETLKP.

Over Met1 to Lys9 the chain is Cytoplasmic. The interval Leu5–Lys9 is mediates interaction with GOLPH3 and is necessary and sufficient for localization to the Golgi. Residues Leu10 to Leu32 traverse the membrane as a helical; Signal-anchor for type II membrane protein segment. The stem region stretch occupies residues Arg33–Phe121. Over Arg33 to Pro427 the chain is Lumenal. 2 N-linked (GlcNAc...) asparagine glycosylation sites follow: Asn58 and Asn95. 4 disulfide bridges follow: Cys59/Cys412, Cys100/Cys172, Cys151/Cys199, and Cys372/Cys380. Residues Pro122–Pro427 are catalytic. UDP-N-acetyl-alpha-D-glucosamine-binding positions include Val128–His130, Asp155–Lys157, and Tyr187. Residues Glu243, Lys251, Arg254, Glu320, Lys341, and Tyr358 each contribute to the a glycoprotein site. The Nucleophile role is filled by Glu320. Positions 377 and 400 each coordinate UDP-N-acetyl-alpha-D-glucosamine.

Belongs to the glycosyltransferase 14 family. In terms of assembly, interacts with GOLPH3; may control GCNT1 retention in the Golgi. In terms of tissue distribution, expressed in tracheal submucosal glands and epithelium (at protein level).

Its subcellular location is the golgi apparatus membrane. The catalysed reaction is a 3-O-[beta-D-galactosyl-(1-&gt;3)-N-acetyl-alpha-D-galactosaminyl]-L-seryl-[protein] + UDP-N-acetyl-alpha-D-glucosamine = 3-O-{beta-D-galactosyl-(1-&gt;3)-[N-acetyl-beta-D-glucosaminyl-(1-&gt;6)]-N-acetyl-alpha-D-galactosaminyl}-L-seryl-[protein] + UDP + H(+). It catalyses the reaction a 3-O-[beta-D-galactosyl-(1-&gt;3)-N-acetyl-alpha-D-galactosaminyl]-L-threonyl-[protein] + UDP-N-acetyl-alpha-D-glucosamine = a 3-O-{beta-D-galactosyl-(1-&gt;3)-[N-acetyl-beta-D-glucosaminyl-(1-&gt;6)]-N-acetyl-alpha-D-galactosaminyl}-L-threonyl-[protein] + UDP + H(+). The enzyme catalyses a globoside GalGb4Cer + UDP-N-acetyl-alpha-D-glucosamine = a globoside GlcNAc-(beta1-&gt;6)-GalGb4Cer + UDP + H(+). It carries out the reaction a ganglioside GA1 + UDP-N-acetyl-alpha-D-glucosamine = a ganglioside beta-D-GlcNAc-(1-&gt;6)-GA1 + UDP + H(+). It participates in protein modification; protein glycosylation. Its pathway is glycolipid biosynthesis. Glycosyltransferase that catalyzes the transfer of an N-acetylglucosamine (GlcNAc) moiety in beta1-6 linkage from UDP-GlcNAc onto mucin-type core 1 O-glycan to form the branched mucin-type core 2 O-glycan. The catalysis is metal ion-independent and occurs with inversion of the anomeric configuration of sugar donor. Selectively involved in synthesis of mucin-type core 2 O-glycans that serve as scaffolds for the display of selectin ligand sialyl Lewis X epitope by myeloid cells, with an impact on homeostasis and recruitment to inflammatory sites. Can also act on glycolipid substrates. Transfers GlcNAc moiety to GalGb4Cer globosides in a reaction step to the synthesis of stage-specific embryonic antigen 1 (SSEA-1) determinant. Can use Galbeta1-3GalNAcalpha1- and Galbeta1-3GalNAcbeta1- oligosaccharide derivatives as acceptor substrates. The polypeptide is Beta-1,3-galactosyl-O-glycosyl-glycoprotein beta-1,6-N-acetylglucosaminyltransferase (GCNT1) (Bos taurus (Bovine)).